The chain runs to 360 residues: Uptake hydrogenase small subunit (360 aa).

Residues 1 to 43 (MVETFYEVMRRQGISRRSFLKYCSLTATSLGLGPSFLPQIAHA) constitute a signal peptide (tat-type signal). The [4Fe-4S] cluster site is built by Cys-60, Cys-63, Cys-158, Cys-192, His-230, Cys-233, Cys-258, and Cys-264. Residues Cys-273, Cys-292, and Cys-295 each coordinate [3Fe-4S] cluster.

Belongs to the [NiFe]/[NiFeSe] hydrogenase small subunit family. Heterodimer of a large and a small subunit. [4Fe-4S] cluster is required as a cofactor. [3Fe-4S] cluster serves as cofactor. Post-translationally, predicted to be exported by the Tat system. The position of the signal peptide cleavage has been experimentally proven.

Its subcellular location is the cell membrane. The catalysed reaction is H2 + A = AH2. In terms of biological role, this enzyme recycles the H(2) produced by nitrogenase to increase the production of ATP and to protect nitrogenase against inhibition or damage by O(2) under carbon- or phosphate-limited conditions. The sequence is that of Uptake hydrogenase small subunit (hoxK) from Cupriavidus necator (strain ATCC 17699 / DSM 428 / KCTC 22496 / NCIMB 10442 / H16 / Stanier 337) (Ralstonia eutropha).